A 385-amino-acid polypeptide reads, in one-letter code: Rhomboid domain-containing protein 3 (385 aa).

The next 5 helical transmembrane spans lie at 13-33, 58-78, 95-115, 146-166, and 168-188; these read ALPL…LLGA, LGHT…TLGW, VLAL…VSGA, WLLP…PPFL, and LLCG…WLEL. Positions 238 to 264 are disordered; that stretch reads PPYLASSDSWPHSDGSAQLPPRLGPGQ. Residues 322 to 361 enclose the UBA domain; it reads SVSSLRLQQLQHMGFPTEQAAVALAATGRVEGAVSLLVEG.

It localises to the membrane. This Mus musculus (Mouse) protein is Rhomboid domain-containing protein 3 (Rhbdd3).